The chain runs to 206 residues: LexA repressor (206 aa).

Residues 28 to 48 (VREIGQAVGLASSSTVHGHLS) constitute a DNA-binding region (H-T-H motif). Active-site for autocatalytic cleavage activity residues include S128 and K166.

This sequence belongs to the peptidase S24 family. As to quaternary structure, homodimer.

It carries out the reaction Hydrolysis of Ala-|-Gly bond in repressor LexA.. Functionally, represses a number of genes involved in the response to DNA damage (SOS response), including recA and lexA. In the presence of single-stranded DNA, RecA interacts with LexA causing an autocatalytic cleavage which disrupts the DNA-binding part of LexA, leading to derepression of the SOS regulon and eventually DNA repair. This is LexA repressor from Bacillus thuringiensis (strain Al Hakam).